Consider the following 587-residue polypeptide: RuBisCO large subunit-binding protein subunit alpha, chloroplastic (587 aa).

The segment covering 1–25 (MASTNALSSTSILRSPTNQAQTSLS) has biased composition (polar residues). A disordered region spans residues 1–33 (MASTNALSSTSILRSPTNQAQTSLSKKVKQHGR). The transit peptide at 1–47 (MASTNALSSTSILRSPTNQAQTSLSKKVKQHGRVNFRQKPNRFVVKA) directs the protein to the chloroplast.

It belongs to the chaperonin (HSP60) family. Oligomer of probably six alpha and six beta subunits.

The protein localises to the plastid. It localises to the chloroplast. This protein binds RuBisCO small and large subunits and is implicated in the assembly of the enzyme oligomer. The chain is RuBisCO large subunit-binding protein subunit alpha, chloroplastic from Pisum sativum (Garden pea).